The sequence spans 141 residues: MEPLHKDAETAAAAAAVAAADPRGASSSSGVVVQVREKKGPLRAAIPYMPFPVAVICLFLNTFVPGLGTFVSAFTVLCGARTDLPDRHVCCVFWLNIAAALIQVLTAIVMVGWIMSIFWGMDMVILAISQGYKDQGIPQQL.

Residue Ser-26 is modified to Phosphoserine. 2 consecutive transmembrane segments (helical) span residues 51–71 (FPVA…GTFV) and 87–107 (RHVC…VLTA).

This sequence belongs to the SPEC3 family. Stum subfamily.

Its subcellular location is the membrane. The protein is Protein stum homolog of Mus musculus (Mouse).